The primary structure comprises 523 residues: Sucrose 6(F)-phosphate phosphorylase (523 aa).

Sucrose 6(F)-phosphate is bound by residues aspartate 58, histidine 96, 221-223 (RLD), glutamate 264, 326-327 (HD), and lysine 434. Aspartate 223 acts as the Nucleophile in catalysis. The active-site Proton donor/acceptor is glutamate 264.

The protein belongs to the glycosyl hydrolase 13 family. Sucrose phosphorylase subfamily. In terms of assembly, monomer.

It catalyses the reaction sucrose 6(F)-phosphate + phosphate = beta-D-fructose 6-phosphate + alpha-D-glucose 1-phosphate. Its function is as follows. Catalyzes the reversible phosphorolysis of sucrose 6(F)-phosphate into alpha-D-glucose 1-phosphate (Glc1P) and D-fructose 6-phosphate. May be involved in a new pathway for the degradation of sucrose, which could become phosphorylated on its fructose moiety during uptake via a PTS system. Shows strict specificity since it does not catalyze reactions with alternative substrates. The sequence is that of Sucrose 6(F)-phosphate phosphorylase from Ilumatobacter coccineus (strain NBRC 103263 / KCTC 29153 / YM16-304).